A 448-amino-acid chain; its full sequence is Potassium/proton antiporter CemA (448 aa).

The next 4 membrane-spanning stretches (helical) occupy residues 224-244 (ALAS…ISML), 325-345 (IILH…LFII), 373-393 (ILLL…EIVI), and 408-428 (IISC…KYWI).

It belongs to the CemA family.

It localises to the plastid. Its subcellular location is the chloroplast inner membrane. It catalyses the reaction K(+)(in) + H(+)(out) = K(+)(out) + H(+)(in). In terms of biological role, contributes to K(+)/H(+) antiport activity by supporting proton efflux to control proton extrusion and homeostasis in chloroplasts in a light-dependent manner to modulate photosynthesis. Prevents excessive induction of non-photochemical quenching (NPQ) under continuous-light conditions. Indirectly promotes efficient inorganic carbon uptake into chloroplasts. The polypeptide is Potassium/proton antiporter CemA (Angiopteris evecta (Mule's foot fern)).